A 100-amino-acid polypeptide reads, in one-letter code: High mobility group protein C (100 aa).

Positions 12–80 (PKRPLSAFFL…KYEKDMQAYE (69 aa)) form a DNA-binding region, HMG box. Residues 81 to 100 (KKYGKPEKQKKIKKNKKGSK) form a disordered region. Residues 90–100 (KKIKKNKKGSK) are compositionally biased toward basic residues.

The protein resides in the nucleus. Its subcellular location is the chromosome. The polypeptide is High mobility group protein C (Tetrahymena thermophila).